Consider the following 1935-residue polypeptide: Myosin-7 (1935 aa).

Positions 32 to 81 (DLKKDVFVPDDKEEFVKAKIISREGGKITAETEHGKTVTVKEDQVLQQNP) constitute a Myosin N-terminal SH3-like domain. The Myosin motor domain maps to 85–778 (DKIEDMAMLT…LLGLLEEMRD (694 aa)). Lys-129 bears the N6,N6,N6-trimethyllysine mark. ATP is bound at residue 178-185 (GESGAGKT). Thr-378 carries the post-translational modification Phosphothreonine. 2 actin-binding regions span residues 655 to 677 (LNKL…IPNE) and 757 to 771 (RFGH…GLLG). Residues 781–810 (LSRIITRIQAQSRGVLARMEFKKLLERRDS) form the IQ domain. Residues 839–1935 (LLKSAETEKE…DIGTKGLNEE (1097 aa)) are a coiled coil. Residues Ser-1137 and Ser-1269 each carry the phosphoserine modification. The residue at position 1282 (Thr-1282) is a Phosphothreonine. A Phosphotyrosine modification is found at Tyr-1308. The residue at position 1309 (Thr-1309) is a Phosphothreonine. Residue Ser-1510 is modified to Phosphoserine. Thr-1513 carries the phosphothreonine modification. Positions 1907 to 1935 (EERADIAESQVNKLRAKSRDIGTKGLNEE) are disordered. Residues 1923–1935 (KSRDIGTKGLNEE) show a composition bias toward basic and acidic residues.

It belongs to the TRAFAC class myosin-kinesin ATPase superfamily. Myosin family. Muscle myosin is a hexameric protein that consists of 2 heavy chain subunits (MHC), 2 alkali light chain subunits (MLC) and 2 regulatory light chain subunits (MLC-2). Interacts with ECPAS. Interacts (via C-terminus) with LRRC39.

The protein resides in the cytoplasm. Its subcellular location is the myofibril. The protein localises to the sarcomere. Its function is as follows. Myosins are actin-based motor molecules with ATPase activity essential for muscle contraction. Forms regular bipolar thick filaments that, together with actin thin filaments, constitute the fundamental contractile unit of skeletal and cardiac muscle. The chain is Myosin-7 (MYH7) from Equus caballus (Horse).